A 454-amino-acid chain; its full sequence is tRNA modification GTPase MnmE (454 aa).

Arg23, Glu80, and Lys120 together coordinate (6S)-5-formyl-5,6,7,8-tetrahydrofolate. The TrmE-type G domain maps to 216 to 377 (GMKVVIAGRP…LRNNLKQSMG (162 aa)). Residue Asn226 coordinates K(+). Residues 226-231 (NAGKSS), 245-251 (TDIAGTT), 270-273 (DTAG), 335-338 (NKAD), and 358-360 (SAR) each bind GTP. Ser230 is a Mg(2+) binding site. K(+) contacts are provided by Thr245, Ile247, and Thr250. Position 251 (Thr251) interacts with Mg(2+). A (6S)-5-formyl-5,6,7,8-tetrahydrofolate-binding site is contributed by Lys454.

Belongs to the TRAFAC class TrmE-Era-EngA-EngB-Septin-like GTPase superfamily. TrmE GTPase family. In terms of assembly, homodimer. Heterotetramer of two MnmE and two MnmG subunits. K(+) is required as a cofactor.

It is found in the cytoplasm. Functionally, exhibits a very high intrinsic GTPase hydrolysis rate. Involved in the addition of a carboxymethylaminomethyl (cmnm) group at the wobble position (U34) of certain tRNAs, forming tRNA-cmnm(5)s(2)U34. In Salmonella paratyphi A (strain ATCC 9150 / SARB42), this protein is tRNA modification GTPase MnmE.